We begin with the raw amino-acid sequence, 86 residues long: Progonadoliberin-2 (86 aa).

Positions 1 to 24 (MVSVARLVFMLGPLLCLGAQLSSS) are cleaved as a signal peptide. A Pyrrolidone carboxylic acid modification is found at Gln25. A Glycine amide modification is found at Gly34.

It belongs to the GnRH family.

It localises to the secreted. Its function is as follows. Stimulates the secretion of gonadotropins. The chain is Progonadoliberin-2 (gnrh2) from Oncorhynchus mykiss (Rainbow trout).